A 347-amino-acid polypeptide reads, in one-letter code: GMP reductase (347 aa).

108-131 (ADFEKTKQILDLNPALNFVCIDVA) is a binding site for NADP(+). 2 residues coordinate K(+): G181 and G183. The Thioimidate intermediate role is filled by C186. 216 to 239 (IVSDGGCTTPGDVAKAFGGGADFV) provides a ligand contact to NADP(+).

The protein belongs to the IMPDH/GMPR family. GuaC type 1 subfamily. In terms of assembly, homotetramer.

It carries out the reaction IMP + NH4(+) + NADP(+) = GMP + NADPH + 2 H(+). Its function is as follows. Catalyzes the irreversible NADPH-dependent deamination of GMP to IMP. It functions in the conversion of nucleobase, nucleoside and nucleotide derivatives of G to A nucleotides, and in maintaining the intracellular balance of A and G nucleotides. The sequence is that of GMP reductase from Shigella boydii serotype 4 (strain Sb227).